A 128-amino-acid polypeptide reads, in one-letter code: Azurin (128 aa).

One can recognise a Plastocyanin-like domain in the interval 1–128 (AECKVTVDST…AMMKGTVTLK (128 aa)). C3 and C26 are joined by a disulfide. Positions 46, 112, 117, and 121 each coordinate Cu cation.

It is found in the periplasm. Functionally, transfers electrons from cytochrome c551 to cytochrome oxidase. This Pseudomonas fluorescens biotype C protein is Azurin.